The following is a 408-amino-acid chain: Energy-coupling factor transporter ATP-binding protein EcfA1 (408 aa).

An ABC transporter domain is found at 140–374 (IEINHLSFKY…KDFLRNIQLD (235 aa)). 174–181 (GHNGSGKS) is an ATP binding site.

It belongs to the ABC transporter superfamily. Energy-coupling factor EcfA family. Forms a stable energy-coupling factor (ECF) transporter complex composed of 2 membrane-embedded substrate-binding proteins (S component), 2 ATP-binding proteins (A component) and 2 transmembrane proteins (T component).

The protein resides in the cell membrane. Its function is as follows. ATP-binding (A) component of a common energy-coupling factor (ECF) ABC-transporter complex. Unlike classic ABC transporters this ECF transporter provides the energy necessary to transport a number of different substrates. The protein is Energy-coupling factor transporter ATP-binding protein EcfA1 of Mycoplasma mycoides subsp. mycoides SC (strain CCUG 32753 / NCTC 10114 / PG1).